Consider the following 45-residue polypeptide: Photosystem II reaction center protein K (45 aa).

A propeptide spanning residues 1–8 (MEAALLLA) is cleaved from the precursor. Residues 24-44 (LPIIPLFFLALAFVWQAAVGF) traverse the membrane as a helical segment.

It belongs to the PsbK family. In terms of assembly, PSII is composed of 1 copy each of membrane proteins PsbA, PsbB, PsbC, PsbD, PsbE, PsbF, PsbH, PsbI, PsbJ, PsbK, PsbL, PsbM, PsbT, PsbX, PsbY, PsbZ, Psb30/Ycf12, peripheral proteins PsbO, CyanoQ (PsbQ), PsbU, PsbV and a large number of cofactors. It forms dimeric complexes.

It localises to the cellular thylakoid membrane. One of the components of the core complex of photosystem II (PSII). PSII is a light-driven water:plastoquinone oxidoreductase that uses light energy to abstract electrons from H(2)O, generating O(2) and a proton gradient subsequently used for ATP formation. It consists of a core antenna complex that captures photons, and an electron transfer chain that converts photonic excitation into a charge separation. The polypeptide is Photosystem II reaction center protein K (Rippkaea orientalis (strain PCC 8801 / RF-1) (Cyanothece sp. (strain PCC 8801))).